The primary structure comprises 181 residues: MSFVPTKVFFTKGVGRHKEYLSSFELALRDAKIEKCNLVTVSSIFPPKCERISVEEGIKLLTPGQITFAVMARNSTNEYNRLMAASIGVAIPADDTQYGYLSEHHPFGEDEEQSGEYAEDLAATMLATTLGIEFDPNKDWDEREGIYKMSGKIINSYNITQSAEGENGLWTTVISCAVLLP.

Pyruvic acid (Ser) is present on S43.

This sequence belongs to the PdaD family. The cofactor is pyruvate.

The enzyme catalyses L-arginine + H(+) = agmatine + CO2. In Chlorobium phaeovibrioides (strain DSM 265 / 1930) (Prosthecochloris vibrioformis (strain DSM 265)), this protein is Probable pyruvoyl-dependent arginine decarboxylase.